Consider the following 367-residue polypeptide: tRNA/tmRNA (uracil-C(5))-methyltransferase (367 aa).

S-adenosyl-L-methionine is bound by residues glutamine 190, tyrosine 218, asparagine 223, glutamate 239, and aspartate 299. Cysteine 324 acts as the Nucleophile in catalysis. The active-site Proton acceptor is glutamate 358.

The protein belongs to the class I-like SAM-binding methyltransferase superfamily. RNA M5U methyltransferase family. TrmA subfamily.

It catalyses the reaction uridine(54) in tRNA + S-adenosyl-L-methionine = 5-methyluridine(54) in tRNA + S-adenosyl-L-homocysteine + H(+). The enzyme catalyses uridine(341) in tmRNA + S-adenosyl-L-methionine = 5-methyluridine(341) in tmRNA + S-adenosyl-L-homocysteine + H(+). Functionally, dual-specificity methyltransferase that catalyzes the formation of 5-methyluridine at position 54 (m5U54) in all tRNAs, and that of position 341 (m5U341) in tmRNA (transfer-mRNA). The protein is tRNA/tmRNA (uracil-C(5))-methyltransferase of Pectobacterium atrosepticum (strain SCRI 1043 / ATCC BAA-672) (Erwinia carotovora subsp. atroseptica).